Consider the following 749-residue polypeptide: Probable serine/threonine-protein kinase fhkD (749 aa).

Positions 47–150 (IFFGRNPKRC…NGTFVKGCIL (104 aa)) constitute an FHA domain. Residues 84–126 (NNNNNDGDNNNNNNNNNNNNNNNNNNNNNNNNNNNNNNNNNNN) are compositionally biased toward low complexity. The interval 84–130 (NNNNNDGDNNNNNNNNNNNNNNNNNNNNNNNNNNNNNNNNNNNTTKN) is disordered. A Protein kinase domain is found at 199–472 (YSIQGILGTG…TKGALSHDWF (274 aa)). ATP is bound by residues 205–213 (LGTGNFSVV) and lysine 228. Aspartate 323 (proton acceptor) is an active-site residue. 2 disordered regions span residues 512 to 620 (NIPM…PAII) and 640 to 749 (CTPT…LKGS). Residues 516-561 (TLNSTTTNTTSPNNNNNNNNNNNNKNNNKNIIKSLNSNSNNYNNNS) show a composition bias toward low complexity. Over residues 562-572 (VLKKTSQSPKT) the composition is skewed to polar residues. Composition is skewed to low complexity over residues 590 to 611 (NNNN…NNNN) and 651 to 667 (TNST…TSNS). Polar residues predominate over residues 668 to 687 (VTMGTSSTSIPVSNSITMKS). Residues 696–707 (DGDKKRKEKESS) show a composition bias toward basic and acidic residues. Low complexity predominate over residues 708–739 (SSENVNDVIVINSNNHNNNNNNNHNINNGISS).

It belongs to the protein kinase superfamily. CAMK Ser/Thr protein kinase family. CHK2 subfamily.

It carries out the reaction L-seryl-[protein] + ATP = O-phospho-L-seryl-[protein] + ADP + H(+). The catalysed reaction is L-threonyl-[protein] + ATP = O-phospho-L-threonyl-[protein] + ADP + H(+). The protein is Probable serine/threonine-protein kinase fhkD (fhkD) of Dictyostelium discoideum (Social amoeba).